We begin with the raw amino-acid sequence, 1323 residues long: PAS domain-containing serine/threonine-protein kinase (1323 aa).

Residue M1 is modified to N-acetylmethionine. S19 is subject to Phosphoserine. The interval 20–47 (LPLPVSAEGPAAQTTAEPSRSFSSAHRH) is disordered. Polar residues predominate over residues 31–43 (AQTTAEPSRSFSS). At T34 the chain carries Phosphothreonine. PAS domains are found at residues 119–190 (SSPL…MEAD) and 335–402 (YRAS…SLQL). S582 is modified (phosphoserine). Residues 837 to 857 (AASDRESPGHVPSTLDAGPED) are disordered. S939 carries the post-translational modification Phosphoserine. The 253-residue stretch at 999 to 1251 (YSTMSPLGSG…LEKLVTDPWV (253 aa)) folds into the Protein kinase domain. ATP is bound by residues 1005–1013 (LGSGAFGFV), K1028, and 1082–1089 (EKHGSGLD). D1128 (proton acceptor) is an active-site residue. Residue D1146 coordinates ATP. A phosphothreonine; by autocatalysis mark is found at T1161 and T1165. The segment at 1298–1323 (CGGPVPGEAPNGQGCLHPGDPRLLTS) is disordered.

It belongs to the protein kinase superfamily. CAMK Ser/Thr protein kinase family. Autophosphorylated on Thr-1161 and Thr-1165. Autophosphorylation is activated by phospholipids. In terms of tissue distribution, ubiquitously expressed, with slightly higher expression in brain, prostate and testis. Reduced expression was found in placenta. Present in germ cells of testis and in the midpiece of sperm tails (at protein level).

The protein resides in the cytoplasm. It is found in the nucleus. The catalysed reaction is L-seryl-[protein] + ATP = O-phospho-L-seryl-[protein] + ADP + H(+). It catalyses the reaction L-threonyl-[protein] + ATP = O-phospho-L-threonyl-[protein] + ADP + H(+). Its activity is regulated as follows. Protein kinase activity is inhibited by the first PAS domain: binding of an unidentified ligand desinhibits the protein kinase activity. May be activated by autophosphorylation on Thr-1161 and Thr-1165. The activating role of autophosphorylation at Thr-1161 is unclear: according to a report, autophosphorylation at Thr-1161 does not play a major role in activation. Autophosphorylation is enhanced upon phosphatidylinositol monophosphate (phosphatidylinositol 4-phosphate) binding and inhibited upon phosphatidylinositol bi- and tri-phosphate binding. In contrast, phosphorylation of target proteins is inhibited upon all phosphatidylinositol-binding (phosphatidylinositol mono- bi- and tri-phosphate). Its function is as follows. Serine/threonine-protein kinase involved in energy homeostasis and protein translation. Phosphorylates EEF1A1, GYS1, PDX1 and RPS6. Probably plays a role under changing environmental conditions (oxygen, glucose, nutrition), rather than under standard conditions. Acts as a sensor involved in energy homeostasis: regulates glycogen synthase synthesis by mediating phosphorylation of GYS1, leading to GYS1 inactivation. May be involved in glucose-stimulated insulin production in pancreas and regulation of glucagon secretion by glucose in alpha cells; however such data require additional evidences. May play a role in regulation of protein translation by phosphorylating EEF1A1, leading to increase translation efficiency. May also participate in respiratory regulation. The sequence is that of PAS domain-containing serine/threonine-protein kinase (PASK) from Homo sapiens (Human).